Reading from the N-terminus, the 433-residue chain is MENRTYTADAEPGETVTVAGWVHEVRDLGGIAFLILRDTTGQIQVKFEKDEMDDELVETGLNVARESVITVSGDVEEEPRAPTGVEVTPETVEVLSEADTELPLDPTGKVDAELSTRLDNRTLDLRSEEGQAIFEIRAEVLRAVREAFRDANATEINTSKIVATGTEGGTELFPITYFGEEAFMNQSPQLFKQLVAGSNIERVFEIGPIFRAEEHNTPRHLNEATSIDFEGAFCDHTDAMDVCEQVVTAAYEAVAENCTDQLEALGITEEFEVPETPFPRLSYEEAIERINATGELDEQLVWGDDLPTEGEKALGDDVGGHYFITDWPAEIKPFYIMDHEDGELSTGFDMMHPRMELVSGGQREHRREELIAGFEQQGLEPEAFEYYTKMFKYGMPPHAGWGLGGERLLMTMLDLDNIREAVLFPRDRQRLSP.

Position 167 (E167) interacts with L-aspartate. The tract at residues 189–192 is aspartate; it reads QLFK. R211 is a binding site for L-aspartate. Residues 211-213, 219-221, and E356 contribute to the ATP site; these read RAE and RHL. Mg(2+) is bound by residues E356 and S359. Positions 359 and 363 each coordinate L-aspartate. Position 404 to 407 (404 to 407) interacts with ATP; that stretch reads GGER.

Belongs to the class-II aminoacyl-tRNA synthetase family. Type 2 subfamily. Homodimer. Mg(2+) is required as a cofactor.

It is found in the cytoplasm. It catalyses the reaction tRNA(Asx) + L-aspartate + ATP = L-aspartyl-tRNA(Asx) + AMP + diphosphate. Functionally, aspartyl-tRNA synthetase with relaxed tRNA specificity since it is able to aspartylate not only its cognate tRNA(Asp) but also tRNA(Asn). Reaction proceeds in two steps: L-aspartate is first activated by ATP to form Asp-AMP and then transferred to the acceptor end of tRNA(Asp/Asn). The sequence is that of Aspartate--tRNA(Asp/Asn) ligase from Natronomonas pharaonis (strain ATCC 35678 / DSM 2160 / CIP 103997 / JCM 8858 / NBRC 14720 / NCIMB 2260 / Gabara) (Halobacterium pharaonis).